Consider the following 154-residue polypeptide: Ribosome maturation factor RimP (154 aa).

The protein belongs to the RimP family.

The protein resides in the cytoplasm. Functionally, required for maturation of 30S ribosomal subunits. The chain is Ribosome maturation factor RimP from Cyanothece sp. (strain PCC 7425 / ATCC 29141).